We begin with the raw amino-acid sequence, 201 residues long: Cerebellin-4 (201 aa).

The signal sequence occupies residues 1–27; it reads MGSGRRALSAVPAVLLVLTLPGLPVWA. 2 N-linked (GlcNAc...) asparagine glycosylation sites follow: N29 and N88. The region spanning 66-201 is the C1q domain; the sequence is AANSKVAFSA…TFSGFLVFPL (136 aa).

Homohexamer; disulfide-linked homotrimers. The trimers are assembled via the globular C1q domains. The trimers associate via N-terminal cysteine residues to form disulfide-linked hexamers. May form oligomers with CBLN1, CBLN2 and CBLN3 prior to secretion. Strongly interacts with DCC in a NTN1-displaceable fashion. Weakly binds to NRXN1 and NRXN2 long and short isoforms produced by alternative promoter usage. Interaction with NRXN3 short isoform is hardly detectable; no interaction at all with NRXN3 long isoform. In terms of processing, sialoglycoprotein.

The protein localises to the secreted. Its subcellular location is the synapse. Functionally, acts as a synaptic organizer in specific subsets of neurons in the brain. Essential for the formation and maintenance of inhibitory GABAergic synapses. Promotes the development of dendrite-targeting inhibitory GABAergic synapses made by somatostatin-positive interneurons. May contribute to the function of ventral medial habenula region of the brain implicated in the regulation of anxiety-related behaviors. May play a role in CBLN3 export from the endoplasmic reticulum and secretion. The polypeptide is Cerebellin-4 (CBLN4) (Homo sapiens (Human)).